Reading from the N-terminus, the 192-residue chain is Phosphoheptose isomerase (192 aa).

The SIS domain maps to 37-192 (LADSFKAGGK…IQLIEKEMVK (156 aa)). Substrate is bound at residue 52-54 (NGG). Residues His61 and Glu65 each contribute to the Zn(2+) site. Substrate contacts are provided by residues Glu65, 93-94 (ND), 119-121 (STS), Ser124, and Gln172. Zn(2+) contacts are provided by Gln172 and His180.

This sequence belongs to the SIS family. GmhA subfamily. As to quaternary structure, homotetramer. Zn(2+) is required as a cofactor.

It localises to the cytoplasm. It carries out the reaction 2 D-sedoheptulose 7-phosphate = D-glycero-alpha-D-manno-heptose 7-phosphate + D-glycero-beta-D-manno-heptose 7-phosphate. It functions in the pathway carbohydrate biosynthesis; D-glycero-D-manno-heptose 7-phosphate biosynthesis; D-glycero-alpha-D-manno-heptose 7-phosphate and D-glycero-beta-D-manno-heptose 7-phosphate from sedoheptulose 7-phosphate: step 1/1. In terms of biological role, catalyzes the isomerization of sedoheptulose 7-phosphate in D-glycero-D-manno-heptose 7-phosphate. The protein is Phosphoheptose isomerase of Enterobacter sp. (strain 638).